Reading from the N-terminus, the 221-residue chain is Deoxyribose-phosphate aldolase (221 aa).

Asp96 serves as the catalytic Proton donor/acceptor. The active-site Schiff-base intermediate with acetaldehyde is Lys157. The active-site Proton donor/acceptor is the Lys185.

This sequence belongs to the DeoC/FbaB aldolase family. DeoC type 1 subfamily.

It localises to the cytoplasm. It carries out the reaction 2-deoxy-D-ribose 5-phosphate = D-glyceraldehyde 3-phosphate + acetaldehyde. The protein operates within carbohydrate degradation; 2-deoxy-D-ribose 1-phosphate degradation; D-glyceraldehyde 3-phosphate and acetaldehyde from 2-deoxy-alpha-D-ribose 1-phosphate: step 2/2. Functionally, catalyzes a reversible aldol reaction between acetaldehyde and D-glyceraldehyde 3-phosphate to generate 2-deoxy-D-ribose 5-phosphate. The sequence is that of Deoxyribose-phosphate aldolase from Crocosphaera subtropica (strain ATCC 51142 / BH68) (Cyanothece sp. (strain ATCC 51142)).